Consider the following 1104-residue polypeptide: Transient receptor potential cation channel subfamily M member 8 (1104 aa).

Residues 1-22 (MSFEGARLSMRSRRNGTMGSTR) are disordered. Over 1–733 (MSFEGARLSM…LWYYVAFFTS (733 aa)) the chain is Cytoplasmic. The helical transmembrane segment at 734–758 (PFVVFSWNVVFYIAFLLLFAYVLLM) threads the bilayer. At 759-765 (DFHSVPH) the chain is on the extracellular side. Residues 766 to 789 (TPELILYALVFVLFCDEVRQWYMN) traverse the membrane as a helical segment. The Ca(2+) site is built by glutamate 782 and glutamine 785. The Cytoplasmic segment spans residues 790-796 (GVNYFTD). The helical transmembrane segment at 797 to 817 (LWNVMDTLGLFYFIAGIVFRL) threads the bilayer. Residues asparagine 799 and aspartate 802 each coordinate Ca(2+). Over 818-822 (HSSNK) the chain is Extracellular. The chain crosses the membrane as a helical span at residues 823 to 848 (SSLYSGRVIFCLDYIIFTLRLIHIFT). Residues 849 to 853 (VSRNL) lie on the Cytoplasmic side of the membrane. A helical membrane pass occupies residues 854–890 (GPKIIMLQRMLIDVFFFLFLFAVWMVAFGVARQGILR). The Extracellular segment spans residues 891-895 (QNEQR). Residues 896–912 (WRWIFRSVIYEPYLAMF) constitute an intramembrane region (pore-forming). Residues 913–953 (GQVPSDVDSTTYDFSHCTFSGNESKPLCVELDEHNLPRFPE) lie on the Extracellular side of the membrane. An N-linked (GlcNAc...) (complex) asparagine glycan is attached at asparagine 934. The helical transmembrane segment at 954 to 984 (WITIPLVCIYMLSTNILLVNLLVAMFGYTVG) threads the bilayer. Over 985-1104 (IVQENNDQVW…LLKEIANNIK (120 aa)) the chain is Cytoplasmic. The stretch at 1069–1104 (TKANDNSEEMRHRFRQLDSKLNDLKSLLKEIANNIK) forms a coiled coil.

This sequence belongs to the transient receptor (TC 1.A.4) family. LTrpC subfamily. TRPM8 sub-subfamily. Homotetramer. Interacts (via N-terminus and C-terminus domains) with TCAF1; the interaction stimulates TRPM8 channel activity. Interacts (via N-terminus and C-terminus domains) with TCAF2; the interaction inhibits TRPM8 channel activity. N-glycosylation is not essential for but facilitates cell surface expression, multimerization, association with lipid rafts and ion channel activity. Expressed in dorsal root and trigeminal ganglia. Specifically expressed in a subset of pain- and temperature-sensing neurons. Not expressed in heavily myelinated neurons. Not expressed in neurons expressing TRPA1 or TRPV1.

The protein resides in the cell membrane. It localises to the membrane raft. The catalysed reaction is Ca(2+)(in) = Ca(2+)(out). The enzyme catalyses Na(+)(in) = Na(+)(out). It carries out the reaction K(+)(in) = K(+)(out). Its activity is regulated as follows. Activated by cold temperatures and by both natural and synthetic cooling compounds such as menthol and icilin. Activation of the channel requires the presence of PI(4,5)P2; PI(4,5)P2 is necessary to gate the channel. Activated by intracellular Ca(2+). In terms of biological role, non-selective ion channel permeable to monovalent and divalent cations, including Na(+), K(+), and Ca(2+), with higher permeability for Ca(2+). Activated by multiple factors, such as temperature, voltage, pressure, and changes in osmolality. Activated by cool temperatures (&lt;23-28 degrees Celsius) and by chemical ligands evoking a sensation of coolness, such as menthol and icilin, therefore plays a central role in the detection of environmental cold temperatures. TRPM8 is a voltage-dependent channel; its activation by cold or chemical ligands shifts its voltage thresholds towards physiological membrane potentials, leading to the opening of the channel. In addition to its critical role in temperature sensing, regulates basal tear secretion by sensing evaporation-induced cooling and changes in osmolality. The chain is Transient receptor potential cation channel subfamily M member 8 (Trpm8) from Mus musculus (Mouse).